Here is a 957-residue protein sequence, read N- to C-terminus: Protein CRT10 (957 aa).

The segment at 695–719 (NSTEEDDVNSDPENEESGSSLTSFQ) is disordered. Acidic residues predominate over residues 697 to 710 (TEEDDVNSDPENEE). Ser704 is subject to Phosphoserine.

Component of a cullin-RING ligase (CRL) composed of 4 subunits: the RING protein HRT1, the cullin RTT101, a linker protein MMS1, and the substrate receptor CRT10. Interacts with MMS1.

Functionally, substrate targeting component of a cullin-RING-based E3 ubiquitin-protein ligase complex RTT101(MMS1-CRT10). RTT101(MMS1-CRT10) may regulate nucleotide synthesis through transcriptional regulation of RNR genes encoding ribonucleotide reductases. The protein is Protein CRT10 (CRT10) of Saccharomyces cerevisiae (strain ATCC 204508 / S288c) (Baker's yeast).